The sequence spans 162 residues: Ribosome maturation factor RimP (162 aa).

It belongs to the RimP family.

It localises to the cytoplasm. In terms of biological role, required for maturation of 30S ribosomal subunits. This Cupriavidus metallidurans (strain ATCC 43123 / DSM 2839 / NBRC 102507 / CH34) (Ralstonia metallidurans) protein is Ribosome maturation factor RimP.